The chain runs to 161 residues: Ribonuclease P protein component (161 aa).

A disordered region spans residues 1 to 20 (MPDELRAEKSFPSKPYDSLK).

This sequence belongs to the RnpA family. Consists of a catalytic RNA component (M1 or rnpB) and a protein subunit.

The enzyme catalyses Endonucleolytic cleavage of RNA, removing 5'-extranucleotides from tRNA precursor.. Its function is as follows. RNaseP catalyzes the removal of the 5'-leader sequence from pre-tRNA to produce the mature 5'-terminus. It can also cleave other RNA substrates such as 4.5S RNA. The protein component plays an auxiliary but essential role in vivo by binding to the 5'-leader sequence and broadening the substrate specificity of the ribozyme. The polypeptide is Ribonuclease P protein component (Helicobacter pylori (strain P12)).